The sequence spans 407 residues: Nuclear hormone receptor family member nhr-86 (407 aa).

The nuclear receptor DNA-binding region spans 21-96 (KSTCSICRED…VGMNPAGVQQ (76 aa)). 2 NR C4-type zinc fingers span residues 24–44 (CSICREDGDGYHFGAEACRAC) and 60–79 (CRGNNDCEITANIRCMCRSC). The region spanning 130–405 (AQSALVEDLH…KDFYDLVNGK (276 aa)) is the NR LBD domain. The interval 394-405 (PPKDFYDLVNGK) is AF-2.

It belongs to the nuclear hormone receptor family. Expressed in intestinal epithelial cells, excretory gland cells and in several head neurons.

The protein resides in the nucleus. Functionally, nuclear receptor which acts as a transcription activator. Binds small molecule ligands, such as phenazine 1-carboxamide (PCN), a pathogen-derived metabolite, leading to modulation of innate immune responses against virulent pathogens. On exposure to exogenous PCN, P.aeruginosa and other xenobiotic immunostimulant such as R24, activates immune response genes, including irg-4, irg-5, mul-1, drd-50, cyp-35C1 and ugt-30, probably via direct interaction with their promoters, and independent of the p38 MAPK pmk-1 pathway. Exhibits higher affinity to R24 than PCN and thus induces stronger immune response. Binds its own promoter thereby autoregulating its expression in the head hypodermis and the pharynx. Possibly plays a role in lipid storage or catabolism. This chain is Nuclear hormone receptor family member nhr-86 (nhr-86), found in Caenorhabditis elegans.